A 304-amino-acid polypeptide reads, in one-letter code: Transcription factor bHLH94 (304 aa).

The disordered stretch occupies residues 86–107; that stretch reads VESHPPPQHRRKRRRTRNCKNK. A compositionally biased stretch (basic residues) spans 92-104; it reads PQHRRKRRRTRNC. Positions 112–163 constitute a bHLH domain; that stretch reads NQRMTHIAVERNRRKQMNEYLAVLRSLMPSSYAQRGDQASIVGGAINYVKEL.

In terms of assembly, homodimer. In terms of tissue distribution, expressed constitutively in roots, leaves, stems, and flowers.

It localises to the nucleus. This chain is Transcription factor bHLH94 (BHLH94), found in Arabidopsis thaliana (Mouse-ear cress).